Reading from the N-terminus, the 417-residue chain is Ribulose bisphosphate carboxylase large chain (417 aa).

Substrate contacts are provided by Asn-103 and Thr-153. Residue Lys-155 is the Proton acceptor of the active site. Lys-157 contacts substrate. Residues Lys-181, Asp-183, and Glu-184 each coordinate Mg(2+). Position 181 is an N6-carboxylysine (Lys-181). His-274 functions as the Proton acceptor in the catalytic mechanism. Substrate contacts are provided by Arg-275, His-307, and Ser-359.

Belongs to the RuBisCO large chain family. Type I subfamily. In terms of assembly, heterohexadecamer of 8 large chains and 8 small chains. Mg(2+) is required as a cofactor.

The protein resides in the plastid. It localises to the chloroplast. The catalysed reaction is 2 (2R)-3-phosphoglycerate + 2 H(+) = D-ribulose 1,5-bisphosphate + CO2 + H2O. The enzyme catalyses D-ribulose 1,5-bisphosphate + O2 = 2-phosphoglycolate + (2R)-3-phosphoglycerate + 2 H(+). Functionally, ruBisCO catalyzes two reactions: the carboxylation of D-ribulose 1,5-bisphosphate, the primary event in carbon dioxide fixation, as well as the oxidative fragmentation of the pentose substrate in the photorespiration process. Both reactions occur simultaneously and in competition at the same active site. The chain is Ribulose bisphosphate carboxylase large chain from Acrostichum aureum (Golden leather fern).